Consider the following 115-residue polypeptide: Large ribosomal subunit protein P2z (115 aa).

The segment at Leu62–Glu115 is disordered. The segment covering Glu92 to Lys102 has biased composition (basic and acidic residues). Phosphoserine is present on Ser105.

This sequence belongs to the eukaryotic ribosomal protein P1/P2 family. As to quaternary structure, P1 and P2 exist as dimers at the large ribosomal subunit. Post-translationally, phosphorylated.

In terms of biological role, plays an important role in the elongation step of protein synthesis. The chain is Large ribosomal subunit protein P2z (RPP2A) from Arabidopsis thaliana (Mouse-ear cress).